The sequence spans 127 residues: MSTIPENLKYADSHEWVLDNGDGTVTVGITDHAQDLLGDVVYVELPEVGTEVTATEQFSLVESVKAASDIYAPVNGEVIEVNDALNDAPELINEAPFEGAWIAKIKLSNAADLDKLLDAAGYSATIA.

In terms of domain architecture, Lipoyl-binding spans 24-106 (TVTVGITDHA…FEGAWIAKIK (83 aa)). Lys65 carries the N6-lipoyllysine modification.

It belongs to the GcvH family. As to quaternary structure, the glycine cleavage system is composed of four proteins: P, T, L and H. It depends on (R)-lipoate as a cofactor.

Functionally, the glycine cleavage system catalyzes the degradation of glycine. The H protein shuttles the methylamine group of glycine from the P protein to the T protein. The chain is Glycine cleavage system H protein from Marinomonas sp. (strain MWYL1).